A 102-amino-acid polypeptide reads, in one-letter code: MANKKIRIRLKAYEHRTLDTAAAKIVETATRTGAEVAGPIPLPTERSLYTIIRATHKYKDSREQFEMRTHKRLIDIINPTQKTVDALMKLDLPSGVNVEIKL.

The protein belongs to the universal ribosomal protein uS10 family. Part of the 30S ribosomal subunit.

Functionally, involved in the binding of tRNA to the ribosomes. The sequence is that of Small ribosomal subunit protein uS10 from Streptococcus sanguinis (strain SK36).